The chain runs to 475 residues: Ribulose bisphosphate carboxylase large chain (475 aa).

Positions 1–2 (MS) are excised as a propeptide. Position 3 is an N-acetylproline (Pro3). Lys14 is modified (N6,N6,N6-trimethyllysine). Residues Asn123 and Thr173 each coordinate substrate. The active-site Proton acceptor is Lys175. Lys177 is a substrate binding site. Residues Lys201, Asp203, and Glu204 each coordinate Mg(2+). An N6-carboxylysine modification is found at Lys201. The active-site Proton acceptor is His294. The substrate site is built by Arg295, His327, and Ser379.

It belongs to the RuBisCO large chain family. Type I subfamily. As to quaternary structure, heterohexadecamer of 8 large chains and 8 small chains; disulfide-linked. The disulfide link is formed within the large subunit homodimers. Mg(2+) is required as a cofactor. In terms of processing, the disulfide bond which can form in the large chain dimeric partners within the hexadecamer appears to be associated with oxidative stress and protein turnover.

Its subcellular location is the plastid. It localises to the chloroplast. The enzyme catalyses 2 (2R)-3-phosphoglycerate + 2 H(+) = D-ribulose 1,5-bisphosphate + CO2 + H2O. It catalyses the reaction D-ribulose 1,5-bisphosphate + O2 = 2-phosphoglycolate + (2R)-3-phosphoglycerate + 2 H(+). RuBisCO catalyzes two reactions: the carboxylation of D-ribulose 1,5-bisphosphate, the primary event in carbon dioxide fixation, as well as the oxidative fragmentation of the pentose substrate in the photorespiration process. Both reactions occur simultaneously and in competition at the same active site. In Psilotum nudum (Whisk fern), this protein is Ribulose bisphosphate carboxylase large chain.